Here is a 216-residue protein sequence, read N- to C-terminus: RNA chaperone ProQ (216 aa).

Basic and acidic residues predominate over residues 105 to 115; it reads ESKAKVAEKRK. Residues 105–159 form a disordered region; it reads ESKAKVAEKRKAQNAAKPGAKKSYKSKTVPAFKSSPKGTNQDNVKPKAKLPPPEK.

The protein belongs to the ProQ family.

The protein resides in the cytoplasm. Its function is as follows. RNA chaperone with significant RNA binding, RNA strand exchange and RNA duplexing activities. The protein is RNA chaperone ProQ of Pseudoalteromonas atlantica (strain T6c / ATCC BAA-1087).